A 478-amino-acid chain; its full sequence is Muscarinic acetylcholine receptor M4 (478 aa).

Topologically, residues 1 to 30 (MXNFTPVNGSSANQSVRLVTAAHNHLETVE) are extracellular. N-linked (GlcNAc...) asparagine glycans are attached at residues Asn8 and Asn13. Residues 31–53 (MVFIATVTGSLSLVTVVGNILVM) form a helical membrane-spanning segment. The Cytoplasmic portion of the chain corresponds to 54-67 (LSIKVNRQLQTVNN). The helical transmembrane segment at 68 to 88 (YFLFSLGCADLIIGAFSMNLY) threads the bilayer. Residues 89–105 (TLYIIKGYWPLGAVVCD) lie on the Extracellular side of the membrane. A disulfide bond links Cys104 and Cys184. Residues 106–127 (LWLALDYVVSNASVMNLLIISF) traverse the membrane as a helical segment. The Cytoplasmic portion of the chain corresponds to 128-147 (DRYFCVTKPLTYPARRTTKM). A helical transmembrane segment spans residues 148 to 170 (AGLMIAAAWVLSFVLWAPAILFW). Residues 171–192 (QFVVGKRTVPDNQCFIQFLSNP) are Extracellular-facing. Residues 193–215 (AVTFGTAIAAFYLPVVIMTVLYI) traverse the membrane as a helical segment. The Cytoplasmic portion of the chain corresponds to 216–400 (HISLASRSRV…AARERKVTRT (185 aa)). The interval 271-333 (LEEAPPPALP…APTLQPRTLN (63 aa)) is disordered. The segment covering 274-285 (APPPALPPPPRP) has biased composition (pro residues). Residues 293-303 (NESSSGSATQN) are compositionally biased toward polar residues. Residues 310–332 (TELSTAEATTPALPAPTLQPRTL) show a composition bias toward low complexity. A helical membrane pass occupies residues 401-421 (IFAILLAFILTWTPYNVMVLV). The Extracellular portion of the chain corresponds to 422-435 (NTFCQSCIPERVWS). A helical membrane pass occupies residues 436–455 (IGYWLCYVNSTINPACYALC). Over 456–478 (NATFKKTFRHLLLCQYRNIGTAR) the chain is Cytoplasmic. 3 positions are modified to phosphothreonine: Thr458, Thr462, and Thr476.

This sequence belongs to the G-protein coupled receptor 1 family. Muscarinic acetylcholine receptor subfamily. CHRM4 sub-subfamily.

Its subcellular location is the cell membrane. The protein resides in the postsynaptic cell membrane. Its function is as follows. The muscarinic acetylcholine receptor mediates various cellular responses, including inhibition of adenylate cyclase, breakdown of phosphoinositides and modulation of potassium channels through the action of G proteins. Primary transducing effect is inhibition of adenylate cyclase. This is Muscarinic acetylcholine receptor M4 (Chrm4) from Rattus norvegicus (Rat).